Reading from the N-terminus, the 508-residue chain is MFLEMLNPMHYNVTIMVPETVPVSAMPLLLIMGLLLLIRNCESSSSIPGPGYCLGIGPLISHGRFLWMGIGSACNYYNKMYGEFMRVWISGEETLIISKSSSMVHVMKHSNYISRFGSKRGLQCIGMHENGIIFNNNPSLWRTVRPFFMKALTGPGLIRMVEVCVESIKQHLDRLGDVTDNSGYVDVVTLMRHIMLDTSNTLFLGIPLDESSIVKKIQGYFNAWQALLIKPNIFFKISWLYRKYERSVKDLKDEIEILVEKKRQKVSSAEKLEDCMDFATDLIFAERRGDLTKENVNQCILEMLIAAPDTMSVTLYVMLLLIAEYPEVETAILKEIHTVVGDRDIRIGDVQNLKVVENFINESLRYQPVVDLVMRRALEDDVIDGYPVKKGTNIILNIGRMHRLEYFPKPNEFTLENFEKNVPYRYFQPFGFGPRSCAGKYIAMVMMKVVLVTLLKRFHVKTLQKRCIENMPKNNDLSLHLDEDSPIVEIIFRHIFNTPFLQCLYISL.

Position 437 (Cys437) interacts with heme.

This sequence belongs to the cytochrome P450 family. Heme serves as cofactor.

The protein resides in the membrane. It carries out the reaction testosterone + 3 reduced [NADPH--hemoprotein reductase] + 3 O2 = 17beta-estradiol + formate + 3 oxidized [NADPH--hemoprotein reductase] + 4 H2O + 4 H(+). The enzyme catalyses androst-4-ene-3,17-dione + 3 reduced [NADPH--hemoprotein reductase] + 3 O2 = estrone + formate + 3 oxidized [NADPH--hemoprotein reductase] + 4 H2O + 4 H(+). Its function is as follows. Catalyzes the formation of aromatic C18 estrogens from C19 androgens. This is Aromatase (Cyp19a1) from Rattus norvegicus (Rat).